Reading from the N-terminus, the 461-residue chain is Elongation factor 1-alpha (461 aa).

The tr-type G domain maps to 5–242 (KIHINIVVIG…DAILPPSRPT (238 aa)). A G1 region spans residues 14 to 21 (GHVDSGKS). 14 to 21 (GHVDSGKS) contacts GTP. Positions 70–74 (GITID) are G2. Residues 91-94 (DAPG) form a G3 region. GTP-binding positions include 91–95 (DAPGH) and 153–156 (NKMD). Positions 153–156 (NKMD) are G4. The G5 stretch occupies residues 194–196 (SGW). Residues glutamate 301 and glutamate 374 each carry the 5-glutamyl glycerylphosphorylethanolamine modification.

This sequence belongs to the TRAFAC class translation factor GTPase superfamily. Classic translation factor GTPase family. EF-Tu/EF-1A subfamily.

The protein resides in the cytoplasm. In terms of biological role, this protein promotes the GTP-dependent binding of aminoacyl-tRNA to the A-site of ribosomes during protein biosynthesis. This chain is Elongation factor 1-alpha, found in Apis mellifera (Honeybee).